The chain runs to 425 residues: 2,3-diketo-L-gulonate TRAP transporter large permease protein YiaN (425 aa).

Transmembrane regions (helical) follow at residues 3 to 23, 54 to 74, 93 to 113, 139 to 159, 170 to 190, 209 to 229, 235 to 255, 277 to 297, 314 to 334, 355 to 375, and 399 to 419; these read VLIF…IAWA, FSLL…AGGL, LGYV…SAVA, LIAS…FIIF, LFMA…LTWW, IWHS…IIGG, FTPT…ATVI, VVMF…IAEL, LLFI…DLTP, IYFG…PPIG, and YVLV…LIIL.

Belongs to the TRAP transporter large permease family. In terms of assembly, the complex comprises the extracytoplasmic solute receptor protein YiaO, and the two transmembrane proteins YiaM and YiaN.

It localises to the cell inner membrane. Part of the tripartite ATP-independent periplasmic (TRAP) transport system YiaMNO involved in the uptake of 2,3-diketo-L-gulonate. This is 2,3-diketo-L-gulonate TRAP transporter large permease protein YiaN (yiaN) from Escherichia coli (strain K12).